The chain runs to 210 residues: Methylthioribulose-1-phosphate dehydratase (210 aa).

The Zn(2+) site is built by His97 and His99.

Belongs to the aldolase class II family. MtnB subfamily. Homotetramer. Zn(2+) is required as a cofactor.

It carries out the reaction 5-(methylsulfanyl)-D-ribulose 1-phosphate = 5-methylsulfanyl-2,3-dioxopentyl phosphate + H2O. The protein operates within amino-acid biosynthesis; L-methionine biosynthesis via salvage pathway; L-methionine from S-methyl-5-thio-alpha-D-ribose 1-phosphate: step 2/6. Its function is as follows. Catalyzes the dehydration of methylthioribulose-1-phosphate (MTRu-1-P) into 2,3-diketo-5-methylthiopentyl-1-phosphate (DK-MTP-1-P). This chain is Methylthioribulose-1-phosphate dehydratase, found in Geobacillus kaustophilus (strain HTA426).